A 145-amino-acid chain; its full sequence is Ribosome-binding factor A (145 aa).

The span at Met-1–Arg-10 shows a compositional bias: basic residues. Disordered regions lie at residues Met-1–Arg-21 and Asp-124–Asp-145.

The protein belongs to the RbfA family. In terms of assembly, monomer. Binds 30S ribosomal subunits, but not 50S ribosomal subunits or 70S ribosomes.

Its subcellular location is the cytoplasm. Functionally, one of several proteins that assist in the late maturation steps of the functional core of the 30S ribosomal subunit. Associates with free 30S ribosomal subunits (but not with 30S subunits that are part of 70S ribosomes or polysomes). Required for efficient processing of 16S rRNA. May interact with the 5'-terminal helix region of 16S rRNA. The chain is Ribosome-binding factor A from Phenylobacterium zucineum (strain HLK1).